Consider the following 462-residue polypeptide: uncharacterized protein (462 aa).

WD repeat units lie at residues 170–209, 212–260, 263–302, 305–344, 347–386, 389–430, and 433–462; these read GGERPIAIVRFSNNGNHFASGSWGGQVKVWNSDNLSEVQL, GHTD…PLLR, GHLARVGRVAFHPSGDYLVSASFDTTWRLWDVHTGVELLM, GHSEGIFSIACQPDGSLVSSGGNDAIGRIWDLRSGKSIMV, EHIRQIVAMAWSPNGYQLATSSADDTVKIWDLRKVSLAHT, AHSS…LIKS, and GHEEKVMSVDGYGDRFISSGYDRTIKLWYP.

The protein resides in the cytoplasm. This is an uncharacterized protein from Schizosaccharomyces pombe (strain 972 / ATCC 24843) (Fission yeast).